The chain runs to 350 residues: tRNA uridine(34) hydroxylase (350 aa).

A Rhodanese domain is found at 146–240 (DDPDAVFIDM…YARRAREQGL (95 aa)). Cysteine 200 serves as the catalytic Cysteine persulfide intermediate. Residues 319–328 (RRRRAGRENG) are compositionally biased toward basic and acidic residues. The interval 319 to 350 (RRRRAGRENGNKIFNKSRGRLNSKLSIPDPAE) is disordered.

It belongs to the TrhO family.

The catalysed reaction is uridine(34) in tRNA + AH2 + O2 = 5-hydroxyuridine(34) in tRNA + A + H2O. Catalyzes oxygen-dependent 5-hydroxyuridine (ho5U) modification at position 34 in tRNAs. This chain is tRNA uridine(34) hydroxylase, found in Salmonella gallinarum (strain 287/91 / NCTC 13346).